Here is a 205-residue protein sequence, read N- to C-terminus: MTENQQLTALLAACHWIGEKGWCPATGGNMSVRLDDAQCLITESGKDKGSLQAEDFLLVEIATNHVPSGRTPSAETGLHTLLYRREPTIGAVLHTHSVNATVLSRVEKGAELVLHGYEMQKSLAGQTTHLDRVAIPIFDNDQDIPALAQRVTEYASHTPLRYGFLVRGHGLYCWGATVKEARRHLEGLEFLFQCELQRRLLEAKA.

Positions 94 and 96 each coordinate Zn(2+).

The protein belongs to the aldolase class II family. MtnB subfamily. Zn(2+) is required as a cofactor.

It catalyses the reaction 5-(methylsulfanyl)-D-ribulose 1-phosphate = 5-methylsulfanyl-2,3-dioxopentyl phosphate + H2O. Its pathway is amino-acid biosynthesis; L-methionine biosynthesis via salvage pathway; L-methionine from S-methyl-5-thio-alpha-D-ribose 1-phosphate: step 2/6. Functionally, catalyzes the dehydration of methylthioribulose-1-phosphate (MTRu-1-P) into 2,3-diketo-5-methylthiopentyl-1-phosphate (DK-MTP-1-P). In Pectobacterium carotovorum subsp. carotovorum (strain PC1), this protein is Methylthioribulose-1-phosphate dehydratase.